The chain runs to 161 residues: Nucleotide-binding protein Reut_A2760 (161 aa).

Belongs to the YajQ family.

Nucleotide-binding protein. This Cupriavidus pinatubonensis (strain JMP 134 / LMG 1197) (Cupriavidus necator (strain JMP 134)) protein is Nucleotide-binding protein Reut_A2760.